The sequence spans 861 residues: MKNDNRIIKNTIKQFKEKLCRDFSQKANITSITRKLAVFIDTILIQLFIKNKLHFGDNFCLLALGSYGRRELQLHSDIDLLILHTEKVSNIQLQRAQKFIQDCWDVGLEVSHQITTVSSCANLASQDLSVISTIMDMFLLCGHGALMEELIYQTHTLHMWPSHQYFFAKLQEQQSRYAKYGETAYNLEPNIKNGPGGLRDLQILLSISKRHFKIKKLAEGIGYGFITDKEYEELKYCQNFLWRVRFALHMLAGKPEERLSFDYQVKLAQFFGYQDQSHILAIEQFMKDYFKVIKRNRELNEMLLQWFNETIVYHQKQKIIRLDDEFQLSNRFIEVRNNRVFKQNPQSILKLFYWLVKRPDIEGVRASTIRLIRESLFLMGKRFRESKETANIFVNIFRTGNDPYDALQRMNRYGVLAHYLDCFATVTGQMQYDLFHAYTVDQHTLFVIRNISRFKKNEYAKQFPLCAKIITALEKPEILYLGALFHDIAKGRGGDHSELGAIEAQQFTQRHYMEAEDSKLIVWLVRYHLLMSQTAQRKDIYDPKTIEQFCQLLPHAKYLDYLYLLTVADICGTNPTLWNAWKDSLLKELYHAAKTRLHKQQELLDEAALISIRKQYAMDILISDGISSRVIQDLWSQFKGKYFLHESPEVIARHTKAILNSKQFPVVIIMPHHSQGGTEVFIYMPHKDERFTITTSVLSNHHVTIQEAAIITCDNQFDLDTYIILDENNQAFLNEQRARDIQKSLCDHLANTGRLPAVSRRRLSRALTHFNVKTQINFIDDNTNHQTQLFLVTNDRPGLLATISRVFLTLNIHLHNAKIATAGERVEDMFYISNQTGYSLNHEEKTILKEKLILEISKSKY.

The uridylyltransferase stretch occupies residues 1 to 321 (MKNDNRIIKN…VYHQKQKIIR (321 aa)). The tract at residues 322–678 (LDDEFQLSNR…IMPHHSQGGT (357 aa)) is uridylyl-removing. Residues 440–562 (VDQHTLFVIR…LPHAKYLDYL (123 aa)) form the HD domain. ACT domains follow at residues 679-760 (EVFI…AVSR) and 788-861 (QLFL…KSKY).

Belongs to the GlnD family. Mg(2+) is required as a cofactor.

It catalyses the reaction [protein-PII]-L-tyrosine + UTP = [protein-PII]-uridylyl-L-tyrosine + diphosphate. The catalysed reaction is [protein-PII]-uridylyl-L-tyrosine + H2O = [protein-PII]-L-tyrosine + UMP + H(+). With respect to regulation, uridylyltransferase (UTase) activity is inhibited by glutamine, while glutamine activates uridylyl-removing (UR) activity. In terms of biological role, modifies, by uridylylation and deuridylylation, the PII regulatory proteins (GlnB and homologs), in response to the nitrogen status of the cell that GlnD senses through the glutamine level. Under low glutamine levels, catalyzes the conversion of the PII proteins and UTP to PII-UMP and PPi, while under higher glutamine levels, GlnD hydrolyzes PII-UMP to PII and UMP (deuridylylation). Thus, controls uridylylation state and activity of the PII proteins, and plays an important role in the regulation of nitrogen assimilation and metabolism. This chain is Bifunctional uridylyltransferase/uridylyl-removing enzyme, found in Legionella pneumophila (strain Lens).